The primary structure comprises 272 residues: 3-methyl-2-oxobutanoate hydroxymethyltransferase (272 aa).

Residues aspartate 51 and aspartate 90 each coordinate Mg(2+). Residues aspartate 51–serine 52, aspartate 90, and lysine 120 contribute to the 3-methyl-2-oxobutanoate site. Glutamate 122 contributes to the Mg(2+) binding site. The Proton acceptor role is filled by glutamate 189.

This sequence belongs to the PanB family. In terms of assembly, homodecamer; pentamer of dimers. Mg(2+) serves as cofactor.

The protein localises to the cytoplasm. It catalyses the reaction 3-methyl-2-oxobutanoate + (6R)-5,10-methylene-5,6,7,8-tetrahydrofolate + H2O = 2-dehydropantoate + (6S)-5,6,7,8-tetrahydrofolate. It participates in cofactor biosynthesis; (R)-pantothenate biosynthesis; (R)-pantoate from 3-methyl-2-oxobutanoate: step 1/2. In terms of biological role, catalyzes the reversible reaction in which hydroxymethyl group from 5,10-methylenetetrahydrofolate is transferred onto alpha-ketoisovalerate to form ketopantoate. In Syntrophus aciditrophicus (strain SB), this protein is 3-methyl-2-oxobutanoate hydroxymethyltransferase.